A 95-amino-acid polypeptide reads, in one-letter code: Small ribosomal subunit protein bS20 (95 aa).

The interval 1-22 (MANIKSQIKRNRTNENNRLRNK) is disordered. Residues 12-22 (RTNENNRLRNK) show a composition bias toward basic and acidic residues.

Belongs to the bacterial ribosomal protein bS20 family.

Functionally, binds directly to 16S ribosomal RNA. This Tropheryma whipplei (strain TW08/27) (Whipple's bacillus) protein is Small ribosomal subunit protein bS20.